The following is a 300-amino-acid chain: N-acetylmuramic acid 6-phosphate etherase (300 aa).

The SIS domain occupies 57–220 (IAVAFQCGGR…TTGAMIRTGK (164 aa)). Glu-85 serves as the catalytic Proton donor. Glu-116 is an active-site residue.

It belongs to the GCKR-like family. MurNAc-6-P etherase subfamily. As to quaternary structure, homodimer.

It carries out the reaction N-acetyl-D-muramate 6-phosphate + H2O = N-acetyl-D-glucosamine 6-phosphate + (R)-lactate. It participates in amino-sugar metabolism; 1,6-anhydro-N-acetylmuramate degradation. Its pathway is amino-sugar metabolism; N-acetylmuramate degradation. The protein operates within cell wall biogenesis; peptidoglycan recycling. Specifically catalyzes the cleavage of the D-lactyl ether substituent of MurNAc 6-phosphate, producing GlcNAc 6-phosphate and D-lactate. Together with AnmK, is also required for the utilization of anhydro-N-acetylmuramic acid (anhMurNAc) either imported from the medium or derived from its own cell wall murein, and thus plays a role in cell wall recycling. This Aliivibrio salmonicida (strain LFI1238) (Vibrio salmonicida (strain LFI1238)) protein is N-acetylmuramic acid 6-phosphate etherase.